The chain runs to 140 residues: MLQPKRTKYRKVQKGRVKGLAHRGSSLAFGTFGIKALEAIWLTARQIEAARIAMTRAMKRQGQVWIRVFPDKPITKKPAEVRMGKGKGSPEYWAAVVKPGKILFEIEGVDINLAREATRLAIHKLPIKAKFVVHKDYINA.

Belongs to the universal ribosomal protein uL16 family. As to quaternary structure, part of the 50S ribosomal subunit.

Binds 23S rRNA and is also seen to make contacts with the A and possibly P site tRNAs. The sequence is that of Large ribosomal subunit protein uL16 from Amoebophilus asiaticus (strain 5a2).